We begin with the raw amino-acid sequence, 227 residues long: MELFETNPYFFPEQRFYDGENFLGSRLQGYEAAAFPERPEVTLCPESRGALEEKDSTLPEHCPGQCLPWACKICKRKTVSIDRRRAATLREKRRLKKVNEAFEALKRSTLLNPNQRLPKVEILRSAIQYIERLQSLLSSLNQQEREQRELRYRPAAPQPAAPSECGSGSSSCSPEWSTQLEFGTNPADHLLSDDQAEDRNLHSLSSIVESIAVEDVAVTFPEERVQN.

Residues 82 to 133 enclose the bHLH domain; that stretch reads DRRRAATLREKRRLKKVNEAFEALKRSTLLNPNQRLPKVEILRSAIQYIERL. The tract at residues 147–196 is disordered; sequence QRELRYRPAAPQPAAPSECGSGSSSCSPEWSTQLEFGTNPADHLLSDDQA. Residues 161 to 175 are compositionally biased toward low complexity; the sequence is APSECGSGSSSCSPE.

In terms of assembly, homodimer and heterodimer. Efficient DNA binding requires dimerization with another bHLH protein.

It localises to the nucleus. Its function is as follows. Acts as a transcriptional activator that promotes transcription of muscle-specific target genes and plays a role in muscle differentiation. Induces fibroblasts to differentiate into myoblasts. Probable sequence specific DNA-binding protein. This chain is Myogenin (MYOG), found in Gallus gallus (Chicken).